Reading from the N-terminus, the 312-residue chain is Porphobilinogen deaminase (312 aa).

Residue Cys241 is modified to S-(dipyrrolylmethanemethyl)cysteine.

It belongs to the HMBS family. In terms of assembly, monomer. Requires dipyrromethane as cofactor.

The catalysed reaction is 4 porphobilinogen + H2O = hydroxymethylbilane + 4 NH4(+). Its pathway is porphyrin-containing compound metabolism; protoporphyrin-IX biosynthesis; coproporphyrinogen-III from 5-aminolevulinate: step 2/4. It functions in the pathway porphyrin-containing compound metabolism; chlorophyll biosynthesis. Functionally, tetrapolymerization of the monopyrrole PBG into the hydroxymethylbilane pre-uroporphyrinogen in several discrete steps. The sequence is that of Porphobilinogen deaminase from Chlorobaculum tepidum (strain ATCC 49652 / DSM 12025 / NBRC 103806 / TLS) (Chlorobium tepidum).